The following is a 435-amino-acid chain: tRNA modification GTPase MnmE (435 aa).

Residues arginine 20, glutamate 77, and lysine 117 each contribute to the (6S)-5-formyl-5,6,7,8-tetrahydrofolate site. The region spanning 214–359 (GFKIVIVGAP…FMKELESFCL (146 aa)) is the TrmE-type G domain. Residues 224–229 (NSGKSS), 243–249 (TEEAGTT), and 268–271 (DTAG) contribute to the GTP site. Mg(2+) is bound by residues serine 228 and threonine 249. Lysine 435 contacts (6S)-5-formyl-5,6,7,8-tetrahydrofolate.

It belongs to the TRAFAC class TrmE-Era-EngA-EngB-Septin-like GTPase superfamily. TrmE GTPase family. As to quaternary structure, homodimer. Heterotetramer of two MnmE and two MnmG subunits. Requires K(+) as cofactor.

It localises to the cytoplasm. Functionally, exhibits a very high intrinsic GTPase hydrolysis rate. Involved in the addition of a carboxymethylaminomethyl (cmnm) group at the wobble position (U34) of certain tRNAs, forming tRNA-cmnm(5)s(2)U34. This is tRNA modification GTPase MnmE from Bartonella henselae (strain ATCC 49882 / DSM 28221 / CCUG 30454 / Houston 1) (Rochalimaea henselae).